The sequence spans 300 residues: uncharacterized protein (300 aa).

Solcar repeat units follow at residues 10-101 (ESQT…VKDF), 119-199 (GKAI…AKEY), and 212-294 (FQNF…LIPF). Transmembrane regions (helical) follow at residues 16-36 (IVGS…VDTI), 70-86 (ATSL…YKIV), 121-141 (AIMH…LLPL), 178-198 (TAAR…FAKE), 215-235 (FFTS…LDVI), and 275-295 (LTTG…IPFF).

It belongs to the mitochondrial carrier (TC 2.A.29) family.

It is found in the mitochondrion inner membrane. This is an uncharacterized protein from Schizosaccharomyces pombe (strain 972 / ATCC 24843) (Fission yeast).